The following is a 139-amino-acid chain: D-ribose pyranase (139 aa).

H20 serves as the catalytic Proton donor. Residues D28, H106, and 128 to 130 each bind substrate; that span reads YAN.

It belongs to the RbsD / FucU family. RbsD subfamily. Homodecamer.

The protein resides in the cytoplasm. It catalyses the reaction beta-D-ribopyranose = beta-D-ribofuranose. Its pathway is carbohydrate metabolism; D-ribose degradation; D-ribose 5-phosphate from beta-D-ribopyranose: step 1/2. In terms of biological role, catalyzes the interconversion of beta-pyran and beta-furan forms of D-ribose. This Salmonella choleraesuis (strain SC-B67) protein is D-ribose pyranase.